Reading from the N-terminus, the 248-residue chain is Probable septum site-determining protein MinC (248 aa).

A disordered region spans residues 94-126 (GMPPAMRGGQPAADFEAPAGEPQANPGAPEPQI).

Belongs to the MinC family. Interacts with MinD and FtsZ.

Cell division inhibitor that blocks the formation of polar Z ring septums. Rapidly oscillates between the poles of the cell to destabilize FtsZ filaments that have formed before they mature into polar Z rings. Prevents FtsZ polymerization. In Brucella suis biovar 1 (strain 1330), this protein is Probable septum site-determining protein MinC.